The following is a 141-amino-acid chain: Sperm-associated microtubule inner protein 10 (141 aa).

The segment covering 1–16 (MASEKDDGPALPKLDD) has biased composition (basic and acidic residues). Positions 1 to 33 (MASEKDDGPALPKLDDDNQTAENTCKPAEEQPQ) are disordered.

In terms of assembly, microtubule inner protein component of sperm flagellar doublet microtubules. Expressed predominantly in the testis.

Its subcellular location is the cytoplasm. It localises to the cytoskeleton. It is found in the flagellum axoneme. Functionally, microtubule inner protein (MIP) part of the dynein-decorated doublet microtubules (DMTs) in flagellum axoneme, which is required for flagellum beating. May serve to reinforce and thus stabilize the microtubule structure in the sperm flagella. Involved in the regulation of sperm motility. The polypeptide is Sperm-associated microtubule inner protein 10 (Spmip10) (Mus musculus (Mouse)).